The following is a 354-amino-acid chain: Probable L-ascorbate-6-phosphate lactonase UlaG (354 aa).

Belongs to the UlaG family. It depends on a divalent metal cation as a cofactor.

Its subcellular location is the cytoplasm. The enzyme catalyses L-ascorbate 6-phosphate + H2O = 3-dehydro-L-gulonate 6-phosphate. It functions in the pathway cofactor degradation; L-ascorbate degradation; D-xylulose 5-phosphate from L-ascorbate: step 1/4. Probably catalyzes the hydrolysis of L-ascorbate-6-P into 3-keto-L-gulonate-6-P. Is essential for L-ascorbate utilization under anaerobic conditions. The sequence is that of Probable L-ascorbate-6-phosphate lactonase UlaG from Escherichia coli O139:H28 (strain E24377A / ETEC).